Consider the following 282-residue polypeptide: Protein NEOXANTHIN-DEFICIENT 1 (282 aa).

In terms of biological role, required for neoxanthin biosynthesis. Probably not involved directly in the enzymatic conversion of violaxanthin to neoxanthin. Is necessary but not sufficient for neoxanthin synthesis. The polypeptide is Protein NEOXANTHIN-DEFICIENT 1 (Arabidopsis thaliana (Mouse-ear cress)).